Consider the following 734-residue polypeptide: ATP-dependent RNA helicase DDX50 (734 aa).

Residues 1–131 form a disordered region; the sequence is MPGKLLWGDI…KAEETLTREQ (131 aa). Over residues 11-20 the composition is skewed to acidic residues; it reads MELEAPLEES. Basic and acidic residues-rich tracts occupy residues 38 to 51 and 67 to 86; these read HSES…RENG and REKL…EFSP. Phosphoserine occurs at positions 41, 81, 85, 113, 119, and 120. Over residues 115–131 the composition is skewed to basic and acidic residues; the sequence is NSHKSSDKAEETLTREQ. Residue K122 forms a Glycyl lysine isopeptide (Lys-Gly) (interchain with G-Cter in SUMO2) linkage. Positions 134–162 match the Q motif motif; sequence GAFSNFSISEETIKLLKGRGVTYLFPIQV. The Helicase ATP-binding domain occupies 165–344; it reads FGPVYEGKDL…KKYMKSRYEQ (180 aa). Position 178 to 185 (178 to 185) interacts with ATP; that stretch reads ARTGTGKT. T244 carries the phosphothreonine modification. The DEVD box motif lies at 287–290; sequence DEVD. A Helicase C-terminal domain is found at 377–521; it reads DVLQVYSGSE…GVPSTMDLVK (145 aa). S515 is subject to Phosphoserine. Residues 664–734 form a disordered region; that stretch reads YYDGNTSSNP…RSGGHKRNFD (71 aa). Residues 679–698 show a composition bias toward gly residues; that stretch reads WSGGRSGRSGRSGGRSGGRS. Positions 699–709 are enriched in low complexity; that stretch reads GRQSRQGSRSG. A compositionally biased stretch (basic residues) spans 717–734; that stretch reads RSGNRNRSRSGGHKRNFD.

It belongs to the DEAD box helicase family. DDX21/DDX50 subfamily. As to quaternary structure, interacts with C1QBP. Interacts with the ubiquitin ligase CTLH complex through GID4. Interacts with TICAM1.

The protein localises to the nucleus. It is found in the nucleolus. The protein resides in the cytoplasm. It carries out the reaction ATP + H2O = ADP + phosphate + H(+). Functionally, ATP-dependent RNA helicase that may play a role in various aspects of RNA metabolism including pre-mRNA splicing or ribosomal RNA production. Also acts as a viral restriction factor and promotes the activation of the NF-kappa-B and IRF3 signaling pathways following its stimulation with viral RNA or infection with RNA and DNA viruses. For instance, decreases vaccinia virus, herpes simplex virus, Zika virus or dengue virus replication during the early stage of infection. Mechanistically, acts via the adapter TICAM1 and independently of the DDX1-DDX21-DHX36 helicase complex to induce the production of interferon-beta. The protein is ATP-dependent RNA helicase DDX50 (Ddx50) of Mus musculus (Mouse).